The chain runs to 373 residues: Putative protein YfkA (373 aa).

Residues 26–256 (YGDMQLTNVE…DIRDENTWML (231 aa)) form the Radical SAM core domain. [4Fe-4S] cluster is bound by residues Cys-42, Cys-46, and Cys-49.

Belongs to the radical SAM superfamily. It depends on [4Fe-4S] cluster as a cofactor.

The polypeptide is Putative protein YfkA (yfkA) (Bacillus subtilis (strain 168)).